Here is a 362-residue protein sequence, read N- to C-terminus: Protein RecA (362 aa).

Residue G77–T84 coordinates ATP.

This sequence belongs to the RecA family.

It localises to the cytoplasm. Can catalyze the hydrolysis of ATP in the presence of single-stranded DNA, the ATP-dependent uptake of single-stranded DNA by duplex DNA, and the ATP-dependent hybridization of homologous single-stranded DNAs. It interacts with LexA causing its activation and leading to its autocatalytic cleavage. This is Protein RecA from Rhizobium etli (strain ATCC 51251 / DSM 11541 / JCM 21823 / NBRC 15573 / CFN 42).